The sequence spans 417 residues: UDP-N-acetylglucosamine 1-carboxyvinyltransferase (417 aa).

22 to 23 (KN) lines the phosphoenolpyruvate pocket. Arg-93 lines the UDP-N-acetyl-alpha-D-glucosamine pocket. Residue Cys-117 is the Proton donor of the active site. Cys-117 is subject to 2-(S-cysteinyl)pyruvic acid O-phosphothioketal. UDP-N-acetyl-alpha-D-glucosamine-binding positions include 122 to 126 (RPVDQ), Asp-305, and Ile-327.

Belongs to the EPSP synthase family. MurA subfamily.

It is found in the cytoplasm. It carries out the reaction phosphoenolpyruvate + UDP-N-acetyl-alpha-D-glucosamine = UDP-N-acetyl-3-O-(1-carboxyvinyl)-alpha-D-glucosamine + phosphate. Its pathway is cell wall biogenesis; peptidoglycan biosynthesis. Functionally, cell wall formation. Adds enolpyruvyl to UDP-N-acetylglucosamine. The sequence is that of UDP-N-acetylglucosamine 1-carboxyvinyltransferase from Nitrosomonas europaea (strain ATCC 19718 / CIP 103999 / KCTC 2705 / NBRC 14298).